Consider the following 528-residue polypeptide: MAGYKPVAIQTYPVLGEKITQDTLYWNNYKTPVQIKEFGAVSKVDFSPQLPYNYAVTASSRIHIYGRYSQEPVKTFSRFKDTAYCATFRQDGQLLVAGSEDGVVQLFDINGRAPLRQFEGHTKAVHTVDFTADNYHVVSGADDYTVKLWDIPNSKEILTFKEHSDYVRCGCASKLNPDLFVTGSYDHTVKIFDARTNKNVLCVEHGQPVESVLLFPSGGLLVSAGGRYVKVWDMLKGGQLLVSLKNHHKTVTCLCLSSSGQRLLSGSLDRKVKVYSTTSYKVVHSFDYAASILSLALSHQDETIVVGMTNGILSVKHRKSEAKKTSLPRRRRPAYRTFIKGKNYLKQRDDIMVSRPAKKHLEGYDKDLKSFRVSQALDRVLEPKCVIRTPEVTVSIIKELTRRGVLANALAGRDEKEVTRVLNFLIRNLSQPRFAPVLINAAEIIIDIYLPVIGQSSVVDKKFIVLQELVEKEIDYQRELLETLGMMDMLFATMTRNDSDPVPEHVPAELPEEKTESPTQPSDTDKNS.

Ala2 carries the post-translational modification N-acetylalanine. 7 WD repeats span residues 36–75, 78–117, 120–159, 162–202, 204–242, 246–285, and 287–326; these read KEFG…PVKT, RFKD…PLRQ, GHTK…EILT, EHSD…NVLC, EHGQ…QLLV, NHHK…VVHS, and DYAA…KKTS. Lys249 is covalently cross-linked (Glycyl lysine isopeptide (Lys-Gly) (interchain with G-Cter in SUMO2)). The tract at residues 496–528 is disordered; it reads RNDSDPVPEHVPAELPEEKTESPTQPSDTDKNS. Basic and acidic residues predominate over residues 497–516; that stretch reads NDSDPVPEHVPAELPEEKTE.

As to quaternary structure, part of the small subunit (SSU) processome, composed of more than 70 proteins and the RNA chaperone small nucleolar RNA (snoRNA) U3. May be a component of the proposed t-UTP subcomplex of the ribosomal small subunit (SSU) processome containing at least UTP4, WDR43, HEATR1, UTP15, WDR75. Interacts directly with UTP4 and WDR43.

The protein resides in the nucleus. It localises to the nucleolus. Ribosome biogenesis factor. Involved in nucleolar processing of pre-18S ribosomal RNA. Required for optimal pre-ribosomal RNA transcription by RNA polymerase I. Part of the small subunit (SSU) processome, first precursor of the small eukaryotic ribosomal subunit. During the assembly of the SSU processome in the nucleolus, many ribosome biogenesis factors, an RNA chaperone and ribosomal proteins associate with the nascent pre-rRNA and work in concert to generate RNA folding, modifications, rearrangements and cleavage as well as targeted degradation of pre-ribosomal RNA by the RNA exosome. The sequence is that of U3 small nucleolar RNA-associated protein 15 homolog (Utp15) from Mus musculus (Mouse).